A 151-amino-acid polypeptide reads, in one-letter code: Nucleoside diphosphate kinase (151 aa).

K9, F57, R86, T92, R103, and N113 together coordinate ATP. The active-site Pros-phosphohistidine intermediate is H116.

The protein belongs to the NDK family. Homotetramer. Mg(2+) is required as a cofactor.

It is found in the cytoplasm. It catalyses the reaction a 2'-deoxyribonucleoside 5'-diphosphate + ATP = a 2'-deoxyribonucleoside 5'-triphosphate + ADP. The catalysed reaction is a ribonucleoside 5'-diphosphate + ATP = a ribonucleoside 5'-triphosphate + ADP. Functionally, major role in the synthesis of nucleoside triphosphates other than ATP. The ATP gamma phosphate is transferred to the NDP beta phosphate via a ping-pong mechanism, using a phosphorylated active-site intermediate. The protein is Nucleoside diphosphate kinase of Chloroflexus aurantiacus (strain ATCC 29364 / DSM 637 / Y-400-fl).